Reading from the N-terminus, the 485-residue chain is Metalloprotease AprA (485 aa).

A Zn(2+)-binding site is contributed by His-187. Glu-188 is a catalytic residue. His-191 and His-197 together coordinate Zn(2+). Ca(2+) is bound by residues Arg-268, Gly-270, Thr-272, Asp-300, Gly-302, Gly-303, Asp-305, Thr-342, Glu-344, Gly-349, Gly-351, Asp-353, Asn-358, Leu-360, Asn-362, Gly-366, Gly-367, Ala-368, Gly-369, Asp-371, Gly-375, Gly-376, Gly-377, Gly-378, Asp-380, Gly-384, Gly-385, Thr-386, Gly-387, Asp-389, Asp-398, Asp-405, Asp-415, Asp-461, Thr-463, Asn-465, Ser-467, and Asp-469. Hemolysin-type calcium-binding repeat units follow at residues 347-364 (FGGSGNDLLIGNALANVL), 365-382 (KGGAGNDIIYGGGGADQL), and 383-395 (WGGTGADTFVFGA).

This sequence belongs to the peptidase M10B family. Ca(2+) is required as a cofactor. Zn(2+) serves as cofactor.

The protein resides in the secreted. Its function is as follows. Secreted protease which is important for P.entomophila to counteract the local immune response of Drosophila. Can degrade antimicrobial peptides (AMPs), e.g. Diptericin and Cecropin A. Thus, protects P.entomophila from the Drosophila antimicrobial peptides produced by the gut innate immune response, and promotes bacterial persistence in the Drosophila gut and killing of the host. Is responsible for maturation of pro-Monalysin to the active toxin Monalysin, by cleaving its N-terminus. The sequence is that of Metalloprotease AprA from Pseudomonas entomophila (strain L48).